We begin with the raw amino-acid sequence, 465 residues long: MKVYNTLTNKKEEFLTLVPGEVKMYVCGPTVYNFFHIGNARTFVVFDTIRRYLEYRGYKVKFIQNFTDIDDKMIKRANEEGSTVKELGDRFIKEYYKDADDLNIERATKNPRATEFMEEIIKFVSDLIEKGYAYEIDGDVYFSTKKFNSYGKLSGQNLEELQLGARINIDERKKDPMDFAIWKSQKPGEPAWESPWGMGRPGWHIECSCMAYNLLGETIDIHAGGSDLSFPHHENEIAQSEARTGKQFAKYWLHSAFVNVNNQKMSKSLNNFFTAREILEKYDADVLRMFMLSGHYRTQINFSMELLDSTKAALDRLYNSINNLENLLDEVKNEELRDEELEYKNELQKYKEKYIEKMDDDFNTADAISVIFDLIRDVNTNVTIESSKELVKYTLDLIRELGNPLGILQESTKASLEEEIEKLIEERQKARKEKNWALADKIRDNLKERGIVLEDTPQGVRWKQI.

Cysteine 27 lines the Zn(2+) pocket. The short motif at 29–39 (PTVYNFFHIGN) is the 'HIGH' region element. Cysteine 207, histidine 232, and glutamate 236 together coordinate Zn(2+). Positions 264–268 (KMSKS) match the 'KMSKS' region motif. Lysine 267 is a binding site for ATP.

The protein belongs to the class-I aminoacyl-tRNA synthetase family. In terms of assembly, monomer. It depends on Zn(2+) as a cofactor.

It is found in the cytoplasm. It carries out the reaction tRNA(Cys) + L-cysteine + ATP = L-cysteinyl-tRNA(Cys) + AMP + diphosphate. This is Cysteine--tRNA ligase from Clostridium botulinum (strain Langeland / NCTC 10281 / Type F).